A 423-amino-acid chain; its full sequence is Elongation factor 1-alpha (423 aa).

In terms of domain architecture, tr-type G spans 5-221 (KEHINVAFIG…DLLKPPEKLV (217 aa)). The G1 stretch occupies residues 14–21 (GHVDHGKS). 14–21 (GHVDHGKS) contributes to the GTP binding site. Ser21 is a Mg(2+) binding site. Positions 70–74 (GVTID) are G2. Positions 91–94 (DCPG) are G3. Residues 91 to 95 (DCPGH) and 146 to 149 (NKMD) each bind GTP. The interval 146–149 (NKMD) is G4. The G5 stretch occupies residues 185–187 (SAY).

It belongs to the TRAFAC class translation factor GTPase superfamily. Classic translation factor GTPase family. EF-Tu/EF-1A subfamily.

Its subcellular location is the cytoplasm. The catalysed reaction is GTP + H2O = GDP + phosphate + H(+). GTP hydrolase that promotes the GTP-dependent binding of aminoacyl-tRNA to the A-site of ribosomes during protein biosynthesis. The polypeptide is Elongation factor 1-alpha (Archaeoglobus fulgidus (strain ATCC 49558 / DSM 4304 / JCM 9628 / NBRC 100126 / VC-16)).